A 313-amino-acid polypeptide reads, in one-letter code: 2,3-dihydroxyphenylpropionate/2,3-dihydroxicinnamic acid 1,2-dioxygenase (313 aa).

The Proton donor role is filled by histidine 116. Histidine 180 (proton acceptor) is an active-site residue.

Belongs to the LigB/MhpB extradiol dioxygenase family. As to quaternary structure, homotetramer. The cofactor is Fe(2+).

It catalyses the reaction 3-(2,3-dihydroxyphenyl)propanoate + O2 = (2Z,4E)-2-hydroxy-6-oxonona-2,4-dienedioate + H(+). The catalysed reaction is (2E)-3-(2,3-dihydroxyphenyl)prop-2-enoate + O2 = (2Z,4E,7E)-2-hydroxy-6-oxonona-2,4,7-trienedioate + H(+). Its pathway is aromatic compound metabolism; 3-phenylpropanoate degradation. In terms of biological role, catalyzes the non-heme iron(II)-dependent oxidative cleavage of 2,3-dihydroxyphenylpropionic acid and 2,3-dihydroxicinnamic acid into 2-hydroxy-6-ketononadienedioate and 2-hydroxy-6-ketononatrienedioate, respectively. This chain is 2,3-dihydroxyphenylpropionate/2,3-dihydroxicinnamic acid 1,2-dioxygenase, found in Mycobacterium sp. (strain MCS).